A 237-amino-acid polypeptide reads, in one-letter code: Ribosomal RNA small subunit methyltransferase G (237 aa).

S-adenosyl-L-methionine contacts are provided by residues Gly78, Phe83, 129–130 (AE), and Arg148. Residues 216–237 (SKKKETPNKYPRKAGTPNKKPL) are disordered.

Belongs to the methyltransferase superfamily. RNA methyltransferase RsmG family.

The protein resides in the cytoplasm. Functionally, specifically methylates the N7 position of a guanine in 16S rRNA. The sequence is that of Ribosomal RNA small subunit methyltransferase G from Streptococcus agalactiae serotype V (strain ATCC BAA-611 / 2603 V/R).